The following is a 157-amino-acid chain: Large ribosomal subunit protein uL3 (157 aa).

Positions 57-98 are disordered; sequence GKGFAGSIKRHNQSRGPESHGSRYHRRPGSMGPIKGKLKGKK.

Belongs to the universal ribosomal protein uL3 family. In terms of assembly, part of the 50S ribosomal subunit. Forms a cluster with proteins L14 and L19.

In terms of biological role, one of the primary rRNA binding proteins, it binds directly near the 3'-end of the 23S rRNA, where it nucleates assembly of the 50S subunit. The chain is Large ribosomal subunit protein uL3 (rplC) from Onion yellows phytoplasma (strain OY-M).